A 241-amino-acid chain; its full sequence is ATP synthase subunit a (241 aa).

Helical transmembrane passes span 30–50, 91–111, 128–148, 193–213, and 214–234; these read GQVF…VVVG, FIGT…LVPW, INTT…AGLS, LVVA…VMFL, and GLFT…YYIG.

The protein belongs to the ATPase A chain family. In terms of assembly, F-type ATPases have 2 components, CF(1) - the catalytic core - and CF(0) - the membrane proton channel. CF(1) has five subunits: alpha(3), beta(3), gamma(1), delta(1), epsilon(1). CF(0) has four main subunits: a, b, b' and c.

It localises to the cellular thylakoid membrane. Its function is as follows. Key component of the proton channel; it plays a direct role in the translocation of protons across the membrane. This Prochlorococcus marinus (strain MIT 9303) protein is ATP synthase subunit a.